The following is an 890-amino-acid chain: Translation initiation factor IF-2 (890 aa).

The disordered stretch occupies residues 45–303 (LIDHLNQKNS…SLQQGFQKPA (259 aa)). Positions 67–81 (STLNIPGTGGKSKSV) are enriched in polar residues. The span at 92–217 (VKRDPQEAER…RMAEENKWTD (126 aa)) shows a compositional bias: basic and acidic residues. A compositionally biased stretch (basic residues) spans 252–266 (GRGRNAKAARPKKGN). Positions 267–280 (KHAESKADREEARA) are enriched in basic and acidic residues. Residues 389 to 558 (PRAPVVTIMG…LLQAEVLELK (170 aa)) form the tr-type G domain. Residues 398–405 (GHVDHGKT) are G1. A GTP-binding site is contributed by 398–405 (GHVDHGKT). Positions 423-427 (GITQH) are G2. The segment at 444–447 (DTPG) is G3. GTP-binding positions include 444 to 448 (DTPGH) and 498 to 501 (NKID). A G4 region spans residues 498–501 (NKID). Residues 534–536 (SAK) are G5. Lysine 808 bears the N6-acetyllysine mark.

Belongs to the TRAFAC class translation factor GTPase superfamily. Classic translation factor GTPase family. IF-2 subfamily.

It localises to the cytoplasm. Functionally, one of the essential components for the initiation of protein synthesis. Protects formylmethionyl-tRNA from spontaneous hydrolysis and promotes its binding to the 30S ribosomal subunits. Also involved in the hydrolysis of GTP during the formation of the 70S ribosomal complex. This Shigella boydii serotype 18 (strain CDC 3083-94 / BS512) protein is Translation initiation factor IF-2.